Consider the following 553-residue polypeptide: Methionine--tRNA ligase (553 aa).

Positions 12 to 22 (PYANSQLHLGH) match the 'HIGH' region motif. Zn(2+) contacts are provided by Cys-144, Cys-147, Cys-157, and Cys-160. The 'KMSKS' region motif lies at 332–336 (KFSKS). Lys-335 lines the ATP pocket.

Belongs to the class-I aminoacyl-tRNA synthetase family. MetG type 1 subfamily. In terms of assembly, monomer. Zn(2+) is required as a cofactor.

The protein localises to the cytoplasm. It catalyses the reaction tRNA(Met) + L-methionine + ATP = L-methionyl-tRNA(Met) + AMP + diphosphate. Is required not only for elongation of protein synthesis but also for the initiation of all mRNA translation through initiator tRNA(fMet) aminoacylation. The protein is Methionine--tRNA ligase of Dehalococcoides mccartyi (strain ATCC BAA-2266 / KCTC 15142 / 195) (Dehalococcoides ethenogenes (strain 195)).